The primary structure comprises 404 residues: Short chain dehydrogenase sirR (404 aa).

Positions 1-28 (MHSKPQRALVIGATGVSGWSLCLQLLQT) are cleaved as a signal peptide. 2 residues coordinate NADP(+): S56 and L58. N67 and N157 each carry an N-linked (GlcNAc...) asparagine glycan. The active-site Proton donor is S237. N274 is a glycosylation site (N-linked (GlcNAc...) asparagine). NADP(+) is bound at residue V291.

Belongs to the short-chain dehydrogenases/reductases (SDR) family. Highly divergent.

It participates in mycotoxin biosynthesis. Functionally, short chain dehydrogenase; part of the gene cluster that mediates the biosynthesis of sirodesmin PL, an epipolythiodioxopiperazine (ETP) characterized by a disulfide bridged cyclic dipeptide and that acts as a phytotoxin which is involved in the blackleg didease of canola. SirD catalyzes the O-prenylation of L-tyrosine (L-Tyr) in the presence of dimethylallyl diphosphate (DMAPP) to yield 4-O-dimethylallyl-L-Tyr, and therefore represents probably the first pathway-specific enzyme in the biosynthesis of sirodesmin PL. 4-O-dimethylallyl-L-Tyr, then undergoes condensation with L-Ser in a reaction catalyzed by the non-ribosomal peptide synthase sirP to form the diketopiperazine (DKP) backbone. Further bishydroxylation of the DKP performed by the cytochrome P450 monooxygenase sirC leads to the production of the intermediate phomamide. This step is essential to form the reactive thiol group required for toxicity of sirodesmin PL. The next steps of sirodesmin biosynthesis are not well understood yet, but some predictions could be made from intermediate compounds identification. Phomamide is converted into phomalizarine via oxidation, probably by sirT. Further oxidation, methylation (by sirM or sirN) and reduction steps convert phomalizarine to deacetyl sirodesmin. Finally, acetyltransferase sirH probably acetylates deacetyl sirodesmin to produce sirodesmin PL. The sequence is that of Short chain dehydrogenase sirR from Leptosphaeria maculans (Blackleg fungus).